The following is a 266-amino-acid chain: Protein phosphatase 1 regulatory subunit 35 (266 aa).

Positions 1-10 (MMVYNGSQLE) are enriched in polar residues. The disordered stretch occupies residues 1–118 (MMVYNGSQLE…QDLGTPVQQS (118 aa)). The span at 21 to 38 (PGPPPEPRAPEPGAPVPE) shows a compositional bias: pro residues. Phosphoserine occurs at positions 46 and 51. The span at 62-79 (GRRKGRADRRGGARKGRQ) shows a compositional bias: basic residues. The segment covering 86-97 (PPSPVRSGPPPA) has biased composition (pro residues).

It belongs to the PPP1R35 family. As to quaternary structure, interacts with PPP1CA; this interaction mediates the PPP1CA phosphatase activity inhibition. Interacts with RTTN; this interaction allows the mutual recruitment to the centriole.

It is found in the cytoplasm. The protein resides in the cytoskeleton. Its subcellular location is the microtubule organizing center. It localises to the centrosome. The protein localises to the centriole. Functionally, during centriole duplication, plays a role in the centriole elongation by promoting the recruitment of the microtubule-binding elongation machinery through its interaction with RTTN, leading to the centriole to centrosome conversion. In addition may play a role in the primary cilia assembly. The chain is Protein phosphatase 1 regulatory subunit 35 from Bos taurus (Bovine).